A 295-amino-acid polypeptide reads, in one-letter code: Mediator of RNA polymerase II transcription subunit 27 (295 aa).

This sequence belongs to the Mediator complex subunit 27 family. In terms of assembly, component of the Mediator complex.

The protein resides in the nucleus. In terms of biological role, component of the Mediator complex, a coactivator involved in the regulated transcription of nearly all RNA polymerase II-dependent genes. Mediator functions as a bridge to convey information from gene-specific regulatory proteins to the basal RNA polymerase II transcription machinery. Mediator is recruited to promoters by direct interactions with regulatory proteins and serves as a scaffold for the assembly of a functional preinitiation complex with RNA polymerase II and the general transcription factors. The sequence is that of Mediator of RNA polymerase II transcription subunit 27 (MED27) from Anopheles gambiae (African malaria mosquito).